Here is a 328-residue protein sequence, read N- to C-terminus: Lipoate--protein ligase 1 (328 aa).

A BPL/LPL catalytic domain is found at 27 to 214; that stretch reads PAEESYFLFY…TIFGETEVEE (188 aa). ATP-binding positions include Arg-69, 74–77, and Lys-131; that span reads GAVY. Lys-131 lines the (R)-lipoate pocket.

The enzyme catalyses L-lysyl-[lipoyl-carrier protein] + (R)-lipoate + ATP = N(6)-[(R)-lipoyl]-L-lysyl-[lipoyl-carrier protein] + AMP + diphosphate + H(+). It functions in the pathway protein modification; protein lipoylation via exogenous pathway; protein N(6)-(lipoyl)lysine from lipoate: step 1/2. It participates in protein modification; protein lipoylation via exogenous pathway; protein N(6)-(lipoyl)lysine from lipoate: step 2/2. Its function is as follows. Catalyzes the lipoylation of proteins, such as GcvH (SAV0833) and GcvH-L (SAV0324), likely via the ATP-dependent activation of lipoate to lipoyl-AMP and the transfer of the activated lipoyl onto the lipoyl domain of the target protein. The protein is Lipoate--protein ligase 1 of Staphylococcus aureus (strain Mu50 / ATCC 700699).